Here is a 495-residue protein sequence, read N- to C-terminus: 3-octaprenyl-4-hydroxybenzoate carboxy-lyase (495 aa).

Mn(2+) is bound at residue asparagine 172. Residues isoleucine 175 to arginine 177, arginine 189 to leucine 191, and arginine 194 to glycine 195 each bind prenylated FMN. Glutamate 238 contributes to the Mn(2+) binding site. Catalysis depends on aspartate 287, which acts as the Proton donor.

Belongs to the UbiD family. In terms of assembly, homohexamer. Requires prenylated FMN as cofactor. Mn(2+) is required as a cofactor.

The protein localises to the cell membrane. The enzyme catalyses a 4-hydroxy-3-(all-trans-polyprenyl)benzoate + H(+) = a 2-(all-trans-polyprenyl)phenol + CO2. The protein operates within cofactor biosynthesis; ubiquinone biosynthesis. Catalyzes the decarboxylation of 3-octaprenyl-4-hydroxy benzoate to 2-octaprenylphenol, an intermediate step in ubiquinone biosynthesis. This is 3-octaprenyl-4-hydroxybenzoate carboxy-lyase from Edwardsiella ictaluri (strain 93-146).